Here is a 106-residue protein sequence, read N- to C-terminus: Large ribosomal subunit protein eL42 (106 aa).

Residues 34–53 (YAQGKRRYDRKQSGYGGQTK) form a disordered region.

Belongs to the eukaryotic ribosomal protein eL42 family. Component of the large ribosomal subunit.

It localises to the cytoplasm. In terms of biological role, component of the large ribosomal subunit. The ribosome is a large ribonucleoprotein complex responsible for the synthesis of proteins in the cell. The protein is Large ribosomal subunit protein eL42 (Rpl36a) of Canis lupus familiaris (Dog).